The following is a 137-amino-acid chain: MPTIQQLIRLGRSVKVSKTASPALEKCPQKRGVCTRVYTTTPKKPNSALRKVARVRLSNKVEVTAYIPGEGHNLQEHSIVLIRGGRVKDLPGVRYHIVRGSLDTSGVADRKQSRSKYGAKQPKAGAPAAPVKGKGKK.

Asp89 carries the 3-methylthioaspartic acid modification. The disordered stretch occupies residues 101–137; it reads SLDTSGVADRKQSRSKYGAKQPKAGAPAAPVKGKGKK. Positions 116-137 are enriched in low complexity; that stretch reads KYGAKQPKAGAPAAPVKGKGKK.

It belongs to the universal ribosomal protein uS12 family. Part of the 30S ribosomal subunit. Contacts proteins S8 and S17. May interact with IF1 in the 30S initiation complex.

In terms of biological role, with S4 and S5 plays an important role in translational accuracy. Interacts with and stabilizes bases of the 16S rRNA that are involved in tRNA selection in the A site and with the mRNA backbone. Located at the interface of the 30S and 50S subunits, it traverses the body of the 30S subunit contacting proteins on the other side and probably holding the rRNA structure together. The combined cluster of proteins S8, S12 and S17 appears to hold together the shoulder and platform of the 30S subunit. The protein is Small ribosomal subunit protein uS12 of Chlorobium chlorochromatii (strain CaD3).